The primary structure comprises 378 residues: Diacetylchitobiose uptake system ATP-binding protein MsiK (378 aa).

Positions 4–236 (VTFDKATRVY…PANLFVAGFI (233 aa)) constitute an ABC transporter domain. Residue 38 to 45 (GPSGCGKS) coordinates ATP.

The protein belongs to the ABC transporter superfamily. The DasABC-MsiK complex is composed of two ATP-binding proteins (MsiK), two transmembrane proteins (DasB and DasC) and a solute-binding protein (DasA). The NgcEFG-MsiK complex is composed of two ATP-binding proteins (MsiK), two transmembrane proteins (NgcF and NgcG) and a solute-binding protein (NgcE).

It localises to the cell membrane. Functionally, part of the ABC transporter complexes DasABC-MsiK and NgcEFG-MsiK involved in N,N'-diacetylchitobiose ((GlcNAc)2) uptake. Responsible for energy coupling to the transport system. The protein is Diacetylchitobiose uptake system ATP-binding protein MsiK of Streptomyces coelicolor (strain ATCC BAA-471 / A3(2) / M145).